We begin with the raw amino-acid sequence, 473 residues long: MAP kinase-activated protein kinase 5 (473 aa).

The region spanning 22–304 (INWTQKLGAG…IEGVLDHPWL (283 aa)) is the Protein kinase domain. ATP-binding positions include 28–36 (LGAGISGPV) and lysine 51. Phosphoserine; by PKA is present on serine 115. Aspartate 148 functions as the Proton acceptor in the catalytic mechanism. Threonine 182 is modified (phosphothreonine; by MAPK11, MAPK14, MAPK4, MAPK6 and PKA). Residues serine 212 and serine 354 each carry the phosphoserine modification. A coiled-coil region spans residues 409 to 440 (ENEDEKLNEVMQEAWKYNRECKLLRDALQSFS).

The protein belongs to the protein kinase superfamily. CAMK Ser/Thr protein kinase family. Interacts with SQSTM1. Interacts with ERK3/MAPK6 and ERK4/MAPK4 (via FRIEDE motif); the interaction is direct. Interacts with YWHAE; the interaction prevents phosphorylation of HSP27/HSPB1 leading to disrupt F-actin polymerization. Phosphorylated on Thr-182 ERK3/MAPK6 or ERK4/MAPK4; which is the regulatory phosphorylation site and is located on the T-loop/loop 12, leading to activation. Phosphorylation at Thr-182 by p38-alpha/MAPK14, p38-beta/MAPK11 is subject to debate. Phosphorylated at Ser-115 by PKA/PRKACA, leading to localization to the cytoplasm. Autophosphorylated. As to expression, expressed ubiquitously.

The protein resides in the cytoplasm. It localises to the nucleus. It catalyses the reaction L-seryl-[protein] + ATP = O-phospho-L-seryl-[protein] + ADP + H(+). The catalysed reaction is L-threonyl-[protein] + ATP = O-phospho-L-threonyl-[protein] + ADP + H(+). Its activity is regulated as follows. Activated following phosphorylation at Thr-182 by p38-alpha/MAPK14, p38-beta/MAPK11, ERK2/MAPK1, ERK3/MAPK6, and ERK4/MAPK4. Activated by stress-related extracellular stimuli; such as H(2)O(2), arsenite, anisomycin TNF alpha and also PMA and the calcium ionophore A23187; but to a lesser extent. In vitro, activated by SQSTM1. Inhibited by diterpenoid alkaloid noroxoaconitine. Its function is as follows. Tumor suppressor serine/threonine-protein kinase involved in mTORC1 signaling and post-transcriptional regulation. Phosphorylates FOXO3, ERK3/MAPK6, ERK4/MAPK4, HSP27/HSPB1, p53/TP53 and RHEB. Acts as a tumor suppressor by mediating Ras-induced senescence and phosphorylating p53/TP53. Involved in post-transcriptional regulation of MYC by mediating phosphorylation of FOXO3: phosphorylation of FOXO3 leads to promote nuclear localization of FOXO3, enabling expression of miR-34b and miR-34c, 2 post-transcriptional regulators of MYC that bind to the 3'UTR of MYC transcript and prevent MYC translation. Acts as a negative regulator of mTORC1 signaling by mediating phosphorylation and inhibition of RHEB. Part of the atypical MAPK signaling via its interaction with ERK3/MAPK6 or ERK4/MAPK4: the precise role of the complex formed with ERK3/MAPK6 or ERK4/MAPK4 is still unclear, but the complex follows a complex set of phosphorylation events: upon interaction with atypical MAPK (ERK3/MAPK6 or ERK4/MAPK4), ERK3/MAPK6 (or ERK4/MAPK4) is phosphorylated and then mediates phosphorylation and activation of MAPKAPK5, which in turn phosphorylates ERK3/MAPK6 (or ERK4/MAPK4). Mediates phosphorylation of HSP27/HSPB1 in response to PKA/PRKACA stimulation, inducing F-actin rearrangement. This chain is MAP kinase-activated protein kinase 5 (Mapkapk5), found in Mus musculus (Mouse).